The following is a 103-amino-acid chain: Small ribosomal subunit protein uS10 (103 aa).

A disordered region spans residues 35–59 (LSGPVPLPTKTLEVPSRKSPDGEGT).

It belongs to the universal ribosomal protein uS10 family. In terms of assembly, part of the 30S ribosomal subunit.

In terms of biological role, involved in the binding of tRNA to the ribosomes. The chain is Small ribosomal subunit protein uS10 (rps10) from Haloarcula marismortui (strain ATCC 43049 / DSM 3752 / JCM 8966 / VKM B-1809) (Halobacterium marismortui).